The primary structure comprises 477 residues: Adenosylhomocysteinase (477 aa).

Substrate contacts are provided by Thr-63, Asp-142, and Glu-202. Residue 203–205 (TTT) coordinates NAD(+). Residues Lys-232 and Asp-236 each coordinate substrate. Residues Asn-237, 266–271 (GYGDVG), Glu-289, Asn-324, 345–347 (IGH), and Asn-390 each bind NAD(+).

Belongs to the adenosylhomocysteinase family. NAD(+) serves as cofactor.

The protein localises to the cytoplasm. The enzyme catalyses S-adenosyl-L-homocysteine + H2O = L-homocysteine + adenosine. It participates in amino-acid biosynthesis; L-homocysteine biosynthesis; L-homocysteine from S-adenosyl-L-homocysteine: step 1/1. Functionally, may play a key role in the regulation of the intracellular concentration of adenosylhomocysteine. The polypeptide is Adenosylhomocysteinase (Methylibium petroleiphilum (strain ATCC BAA-1232 / LMG 22953 / PM1)).